The following is a 201-amino-acid chain: Dermatopontin (201 aa).

A signal peptide spans 1-18; the sequence is MDLTLLWVLLPLVTVAWG. The residue at position 19 (Q19) is a Pyrrolidone carboxylic acid. At Y23 the chain carries Sulfotyrosine. Repeat copies occupy residues 26 to 79, 70 to 75, 80 to 135, and 125 to 130. The segment at 26-135 is 2 X 53-55 AA tandem repeats; it reads SYHQYHDYSD…REWQFYCCRY (110 aa). Intrachain disulfides connect C50/C77, C90/C132, C106/C133, C139/C196, and C143/C189. The tract at residues 70–186 is 3 X 6 AA tandem repeats of D-R-[EQ]-W-[NQK]-[FY]; sequence DRQWNYACMP…AVERDRQWKF (117 aa). Sulfotyrosine occurs at positions 162, 164, 166, and 167. The stretch at 181-186 is one 2-3 repeat; the sequence is DRQWKF. At Y194 the chain carries Sulfotyrosine.

Belongs to the dermatopontin family. As to quaternary structure, interacts with TGFB1, DCN and collagen. Post-translationally, sulfated on tyrosine residue(s). As to expression, expressed in skeletal muscle, heart, pancreas, skin and cultured fibroblasts.

The protein localises to the secreted. It is found in the extracellular space. Its subcellular location is the extracellular matrix. In terms of biological role, seems to mediate adhesion by cell surface integrin binding. May serve as a communication link between the dermal fibroblast cell surface and its extracellular matrix environment. Enhances TGFB1 activity. Inhibits cell proliferation. Accelerates collagen fibril formation, and stabilizes collagen fibrils against low-temperature dissociation. The sequence is that of Dermatopontin (DPT) from Bos taurus (Bovine).